Consider the following 261-residue polypeptide: Succinate dehydrogenase iron-sulfur subunit (261 aa).

Residues arginine 28–methionine 119 form the 2Fe-2S ferredoxin-type domain. [2Fe-2S] cluster contacts are provided by cysteine 80, cysteine 85, and cysteine 100. In terms of domain architecture, 4Fe-4S ferredoxin-type spans aspartate 161–tyrosine 191. [4Fe-4S] cluster is bound by residues cysteine 171, cysteine 174, and cysteine 177. Position 181 (cysteine 181) interacts with [3Fe-4S] cluster. Tryptophan 186 lines the a ubiquinone pocket. Residues cysteine 228 and cysteine 234 each contribute to the [3Fe-4S] cluster site. [4Fe-4S] cluster is bound at residue cysteine 238.

Belongs to the succinate dehydrogenase/fumarate reductase iron-sulfur protein family. Part of an enzyme complex containing four subunits: a flavoprotein, an iron-sulfur, cytochrome b-556, and a hydrophobic anchor protein. [2Fe-2S] cluster is required as a cofactor. It depends on [3Fe-4S] cluster as a cofactor. Requires [4Fe-4S] cluster as cofactor.

The enzyme catalyses a quinone + succinate = fumarate + a quinol. The protein operates within carbohydrate metabolism; tricarboxylic acid cycle; fumarate from succinate (bacterial route): step 1/1. This chain is Succinate dehydrogenase iron-sulfur subunit (sdhB), found in Rickettsia typhi (strain ATCC VR-144 / Wilmington).